Consider the following 211-residue polypeptide: Thioredoxin domain-containing protein 9 homolog (211 aa).

Residues Tyr68–Val178 form the Thioredoxin domain. Positions Glu184–Ser203 are enriched in polar residues. The disordered stretch occupies residues Glu184–Glu211.

This is Thioredoxin domain-containing protein 9 homolog from Arabidopsis thaliana (Mouse-ear cress).